A 428-amino-acid polypeptide reads, in one-letter code: Growth/differentiation factor 2 (428 aa).

An N-terminal signal peptide occupies residues 1 to 22; sequence MSPGAFRVALLPLFLLVCVTQQ. A propeptide spanning residues 23–318 is cleaved from the precursor; sequence KPLQNWEQAS…VGPLLARRKR (296 aa). N-linked (GlcNAc...) asparagine glycosylation is found at Asn-70 and Asn-135. Cys-155 and Cys-236 form a disulfide bridge. N-linked (GlcNAc...) asparagine glycosylation is present at Asn-262. Cystine bridges form between Cys-326/Cys-392, Cys-355/Cys-425, and Cys-359/Cys-427. The segment at 401–415 is interaction with ENG; that stretch reads SILYKDDMGVPTLKY.

The protein belongs to the TGF-beta family. Homodimer; disulfide-linked. Detected in extracellular fluid as mature homodimer, and in complex with its propeptide. Interacts with ACVRL1, BMPR2 and ACVR2B with high affinity (in vitro). Identified in a complex with ACVRL1 and ACVR2B. Has ten times lower affinity for ACVR2A (in vitro). Interacts with ENG, forming a heterotetramer with a 2:2 stoichiometry. Can form a heteromeric complex with ENG and ACVRL1. Interacts with type I receptor ACVR1. A reversible disulfide bond can be formed between the two subunits in the homodimer; this has no effect on GDF2 activity.

The protein localises to the secreted. Functionally, potent circulating inhibitor of angiogenesis. Signals through the type I activin receptor ACVRL1 but not other Alks. Signaling through SMAD1 in endothelial cells requires TGF-beta coreceptor endoglin/ENG. In Mus musculus (Mouse), this protein is Growth/differentiation factor 2 (Gdf2).